The following is a 78-amino-acid chain: Translational regulator CsrA (78 aa).

It belongs to the CsrA/RsmA family. In terms of assembly, homodimer; the beta-strands of each monomer intercalate to form a hydrophobic core, while the alpha-helices form wings that extend away from the core.

It localises to the cytoplasm. Functionally, a translational regulator that binds mRNA to regulate translation initiation and/or mRNA stability. Usually binds in the 5'-UTR at or near the Shine-Dalgarno sequence preventing ribosome-binding, thus repressing translation. Its main target seems to be the major flagellin gene, while its function is anatagonized by FliW. The chain is Translational regulator CsrA from Oleidesulfovibrio alaskensis (strain ATCC BAA-1058 / DSM 17464 / G20) (Desulfovibrio alaskensis).